A 315-amino-acid chain; its full sequence is MAAGVPCALVTSCSSVFSGDQLVQHILGTEDLIVEVTSNDAVRFYPWTIDNKYYSADINLCVVPNKFLVTAEIAESVQAFVVYFDSTQKSGLDSVSSWLPLAKAWLPEVMILVCDRVSEDGINRQKAQEWCIKHGFELVELSPEELPEEDDDFPESTGVKRIVQALNANVWSNVVMKNDRNQGFSLLNSLTGTNHSIGSADPCHPEQPHLPAADSTESLSDHRGGASNTTDAQVDSIVDPMLDLDIQELASLTTGGGDVENFERLFSKLKEMKDKAATLPHEQRKVHAEKVAKAFWMAIGGDRDEIEGLSSDEEH.

The disordered stretch occupies residues 197–234; it reads IGSADPCHPEQPHLPAADSTESLSDHRGGASNTTDAQV. Phosphoserine occurs at positions 310 and 311.

As to quaternary structure, associated with AP-1 and AP-2 complexes. In terms of tissue distribution, widely expressed, including in skin and keratinocytes, with highest levels in adrenal gland, rectum and thymus.

It localises to the cytoplasm. It is found in the cytosol. May be involved in endocytic recycling of growth factor receptors such as EGFR. This is Alpha- and gamma-adaptin-binding protein p34 (AAGAB) from Homo sapiens (Human).